A 128-amino-acid chain; its full sequence is Fluoride-specific ion channel FluC (128 aa).

Transmembrane regions (helical) follow at residues 4–24, 37–57, 65–85, and 101–121; these read VMGIIAVALGGAVGSLARYAI, FGTFIANLAGCLFIGLLWSFF, TFRLFLFTGLLGGLTTFSTFS, and FGYLFLSISLGLAMVAVGFFI. Residues glycine 76 and threonine 79 each coordinate Na(+).

Belongs to the fluoride channel Fluc/FEX (TC 1.A.43) family.

It localises to the cell inner membrane. It catalyses the reaction fluoride(in) = fluoride(out). Its activity is regulated as follows. Na(+) is not transported, but it plays an essential structural role and its presence is essential for fluoride channel function. Its function is as follows. Fluoride-specific ion channel. Important for reducing fluoride concentration in the cell, thus reducing its toxicity. The protein is Fluoride-specific ion channel FluC of Desulfotalea psychrophila (strain LSv54 / DSM 12343).